Reading from the N-terminus, the 505-residue chain is N-succinylglutamate 5-semialdehyde dehydrogenase (505 aa).

234–239 serves as a coordination point for NAD(+); it reads GSAHTG. Catalysis depends on residues Glu257 and Cys291.

It belongs to the aldehyde dehydrogenase family. AstD subfamily.

The catalysed reaction is N-succinyl-L-glutamate 5-semialdehyde + NAD(+) + H2O = N-succinyl-L-glutamate + NADH + 2 H(+). It participates in amino-acid degradation; L-arginine degradation via AST pathway; L-glutamate and succinate from L-arginine: step 4/5. Functionally, catalyzes the NAD-dependent reduction of succinylglutamate semialdehyde into succinylglutamate. The sequence is that of N-succinylglutamate 5-semialdehyde dehydrogenase from Yersinia pseudotuberculosis serotype IB (strain PB1/+).